The sequence spans 88 residues: Large ribosomal subunit protein bL27 (88 aa).

The interval 1–23 is disordered; that stretch reads MAHKKGTGSTRNGRDSNSKRLGV.

This sequence belongs to the bacterial ribosomal protein bL27 family.

This Synechococcus sp. (strain CC9902) protein is Large ribosomal subunit protein bL27.